Consider the following 202-residue polypeptide: Adenylyl-sulfate kinase (202 aa).

31–38 (GLSASGKS) lines the ATP pocket. Catalysis depends on serine 105, which acts as the Phosphoserine intermediate.

Belongs to the APS kinase family.

It catalyses the reaction adenosine 5'-phosphosulfate + ATP = 3'-phosphoadenylyl sulfate + ADP + H(+). The protein operates within sulfur metabolism; hydrogen sulfide biosynthesis; sulfite from sulfate: step 2/3. Catalyzes the synthesis of activated sulfate. In Saccharomyces cerevisiae (strain ATCC 204508 / S288c) (Baker's yeast), this protein is Adenylyl-sulfate kinase (MET14).